The sequence spans 319 residues: Acetyl-coenzyme A carboxylase carboxyl transferase subunit alpha (319 aa).

One can recognise a CoA carboxyltransferase C-terminal domain in the interval 35–296 (NIDEEVHRLR…KAQLLEDLAD (262 aa)).

The protein belongs to the AccA family. Acetyl-CoA carboxylase is a heterohexamer composed of biotin carboxyl carrier protein (AccB), biotin carboxylase (AccC) and two subunits each of ACCase subunit alpha (AccA) and ACCase subunit beta (AccD).

The protein resides in the cytoplasm. The catalysed reaction is N(6)-carboxybiotinyl-L-lysyl-[protein] + acetyl-CoA = N(6)-biotinyl-L-lysyl-[protein] + malonyl-CoA. It functions in the pathway lipid metabolism; malonyl-CoA biosynthesis; malonyl-CoA from acetyl-CoA: step 1/1. Its function is as follows. Component of the acetyl coenzyme A carboxylase (ACC) complex. First, biotin carboxylase catalyzes the carboxylation of biotin on its carrier protein (BCCP) and then the CO(2) group is transferred by the carboxyltransferase to acetyl-CoA to form malonyl-CoA. The chain is Acetyl-coenzyme A carboxylase carboxyl transferase subunit alpha from Salmonella dublin (strain CT_02021853).